A 182-amino-acid chain; its full sequence is Peptidyl-prolyl cis-trans isomerase C, mitochondrial (182 aa).

Residues 1 to 20 (MFKRSIIQQSRLFSNSASRL) constitute a mitochondrion transit peptide. In terms of domain architecture, PPIase cyclophilin-type spans 25–181 (FFDPAVNGTK…AEIVIEEAGE (157 aa)).

Belongs to the cyclophilin-type PPIase family.

It localises to the mitochondrion matrix. The catalysed reaction is [protein]-peptidylproline (omega=180) = [protein]-peptidylproline (omega=0). Its activity is regulated as follows. Inhibited by the immunosuppressant drug cyclosporin A and by SDZ NIM811, a PPIase inhibitor. Functionally, PPIases accelerate the folding of proteins. It catalyzes the cis-trans isomerization of proline imidic peptide bonds in oligopeptides. This isozyme is required for growth on lactate at high temperature. The protein is Peptidyl-prolyl cis-trans isomerase C, mitochondrial (CPR3) of Saccharomyces cerevisiae (strain ATCC 204508 / S288c) (Baker's yeast).